Consider the following 72-residue polypeptide: Mitotic-spindle organizing protein 1 (72 aa).

Belongs to the MOZART1 family. In terms of assembly, part of the gamma-tubulin complex.

The protein localises to the cytoplasm. The protein resides in the cytoskeleton. It is found in the microtubule organizing center. It localises to the centrosome. Its subcellular location is the spindle. Its function is as follows. Required for gamma-tubulin complex recruitment to the centrosome. The sequence is that of Mitotic-spindle organizing protein 1 (mzt1) from Xenopus tropicalis (Western clawed frog).